Here is a 268-residue protein sequence, read N- to C-terminus: Undecaprenyl-diphosphatase (268 aa).

7 helical membrane passes run 5–25 (TIAQ…IPVS), 43–63 (GKAF…SVYA), 84–104 (LGIL…YQII), 107–127 (VLFE…IVLL), 184–204 (AAEF…AYDL), 214–234 (ADLQ…VLVV), and 247–267 (ALFG…VLVL).

Belongs to the UppP family.

It is found in the cell inner membrane. The enzyme catalyses di-trans,octa-cis-undecaprenyl diphosphate + H2O = di-trans,octa-cis-undecaprenyl phosphate + phosphate + H(+). Functionally, catalyzes the dephosphorylation of undecaprenyl diphosphate (UPP). Confers resistance to bacitracin. The chain is Undecaprenyl-diphosphatase from Chelativorans sp. (strain BNC1).